The chain runs to 432 residues: Selenocysteine lyase (432 aa).

Residue Met1 is modified to N-acetylmethionine. Residues 1–20 (MDVARNGARGSVESPPNRKV) form a disordered region. Position 117 is a phosphoserine (Ser117). Lys247 is subject to N6-(pyridoxal phosphate)lysine. The active-site S-selanylcysteine intermediate is the Cys375.

The protein belongs to the class-V pyridoxal-phosphate-dependent aminotransferase family. Homodimer. Requires pyridoxal 5'-phosphate as cofactor.

It is found in the cytoplasm. The protein resides in the cytosol. It carries out the reaction L-selenocysteine + AH2 = hydrogenselenide + L-alanine + A + H(+). In terms of biological role, catalyzes the decomposition of L-selenocysteine to L-alanine and elemental selenium. This is Selenocysteine lyase (Scly) from Rattus norvegicus (Rat).